A 189-amino-acid polypeptide reads, in one-letter code: HTH-type transcriptional repressor AcnR (189 aa).

In terms of domain architecture, HTH tetR-type spans 10–70 (AERKVEILSG…EVAHEDMRKM (61 aa)). The H-T-H motif DNA-binding region spans 33–52 (TVARLEETIGKSRGAIFHHY). Citrate-binding positions include 79 to 80 (LI), R130, and Q134. E181 contacts Mg(2+). R185 provides a ligand contact to citrate.

Homodimer.

In terms of biological role, acnR negatively controls the expression of the aconitase gene acn. This chain is HTH-type transcriptional repressor AcnR, found in Corynebacterium jeikeium (strain K411).